We begin with the raw amino-acid sequence, 186 residues long: UPF0397 protein lp_0150 (186 aa).

5 helical membrane passes run 12 to 32 (VVATGIGAAVIFVLMKFVAIP), 45 to 65 (GFLALLGAIFGPVAAGLAVFI), 76 to 96 (GSPWWTWVIVDGLIGVAFGLA), 112 to 132 (LVWFNIYQIIVNFIGWVLLAP), and 151 to 171 (VITWIADSISVAIIGTILLVL).

The protein belongs to the UPF0397 family.

The protein localises to the cell membrane. The protein is UPF0397 protein lp_0150 of Lactiplantibacillus plantarum (strain ATCC BAA-793 / NCIMB 8826 / WCFS1) (Lactobacillus plantarum).